Consider the following 291-residue polypeptide: 33 kDa chaperonin (291 aa).

2 disulfides stabilise this stretch: Cys237–Cys239 and Cys270–Cys273.

Belongs to the HSP33 family. In terms of processing, under oxidizing conditions two disulfide bonds are formed involving the reactive cysteines. Under reducing conditions zinc is bound to the reactive cysteines and the protein is inactive.

It is found in the cytoplasm. Redox regulated molecular chaperone. Protects both thermally unfolding and oxidatively damaged proteins from irreversible aggregation. Plays an important role in the bacterial defense system toward oxidative stress. This is 33 kDa chaperonin from Bacillus mycoides (strain KBAB4) (Bacillus weihenstephanensis).